The chain runs to 313 residues: 4-hydroxy-3-methylbut-2-enyl diphosphate reductase (313 aa).

Cysteine 12 serves as a coordination point for [4Fe-4S] cluster. Residues histidine 41 and histidine 74 each coordinate (2E)-4-hydroxy-3-methylbut-2-enyl diphosphate. The dimethylallyl diphosphate site is built by histidine 41 and histidine 74. Residues histidine 41 and histidine 74 each coordinate isopentenyl diphosphate. Residue cysteine 96 coordinates [4Fe-4S] cluster. Histidine 124 provides a ligand contact to (2E)-4-hydroxy-3-methylbut-2-enyl diphosphate. Residue histidine 124 coordinates dimethylallyl diphosphate. Histidine 124 provides a ligand contact to isopentenyl diphosphate. Glutamate 126 serves as the catalytic Proton donor. Position 167 (threonine 167) interacts with (2E)-4-hydroxy-3-methylbut-2-enyl diphosphate. Cysteine 197 is a [4Fe-4S] cluster binding site. Residues serine 225, serine 226, asparagine 227, and serine 269 each contribute to the (2E)-4-hydroxy-3-methylbut-2-enyl diphosphate site. Residues serine 225, serine 226, asparagine 227, and serine 269 each coordinate dimethylallyl diphosphate. Isopentenyl diphosphate contacts are provided by serine 225, serine 226, asparagine 227, and serine 269.

The protein belongs to the IspH family. It depends on [4Fe-4S] cluster as a cofactor.

It catalyses the reaction isopentenyl diphosphate + 2 oxidized [2Fe-2S]-[ferredoxin] + H2O = (2E)-4-hydroxy-3-methylbut-2-enyl diphosphate + 2 reduced [2Fe-2S]-[ferredoxin] + 2 H(+). The enzyme catalyses dimethylallyl diphosphate + 2 oxidized [2Fe-2S]-[ferredoxin] + H2O = (2E)-4-hydroxy-3-methylbut-2-enyl diphosphate + 2 reduced [2Fe-2S]-[ferredoxin] + 2 H(+). It functions in the pathway isoprenoid biosynthesis; dimethylallyl diphosphate biosynthesis; dimethylallyl diphosphate from (2E)-4-hydroxy-3-methylbutenyl diphosphate: step 1/1. It participates in isoprenoid biosynthesis; isopentenyl diphosphate biosynthesis via DXP pathway; isopentenyl diphosphate from 1-deoxy-D-xylulose 5-phosphate: step 6/6. In terms of biological role, catalyzes the conversion of 1-hydroxy-2-methyl-2-(E)-butenyl 4-diphosphate (HMBPP) into a mixture of isopentenyl diphosphate (IPP) and dimethylallyl diphosphate (DMAPP). Acts in the terminal step of the DOXP/MEP pathway for isoprenoid precursor biosynthesis. The sequence is that of 4-hydroxy-3-methylbut-2-enyl diphosphate reductase from Photobacterium profundum (strain SS9).